A 511-amino-acid polypeptide reads, in one-letter code: D-alanine--D-alanyl carrier protein ligase (511 aa).

An ATP-binding site is contributed by 152–153 (TS). Asp-199 is a binding site for D-alanine. 294–299 (NAYGPT) is an ATP binding site. Val-303 is a binding site for D-alanine. Residues Asp-385, 397–400 (YGGR), and Lys-499 each bind ATP. Residue Lys-499 participates in D-alanine binding.

This sequence belongs to the ATP-dependent AMP-binding enzyme family. DltA subfamily.

It is found in the cytoplasm. The enzyme catalyses holo-[D-alanyl-carrier protein] + D-alanine + ATP = D-alanyl-[D-alanyl-carrier protein] + AMP + diphosphate. It participates in cell wall biogenesis; lipoteichoic acid biosynthesis. Functionally, catalyzes the first step in the D-alanylation of lipoteichoic acid (LTA), the activation of D-alanine and its transfer onto the D-alanyl carrier protein (Dcp) DltC. In an ATP-dependent two-step reaction, forms a high energy D-alanyl-AMP intermediate, followed by transfer of the D-alanyl residue as a thiol ester to the phosphopantheinyl prosthetic group of the Dcp. D-alanylation of LTA plays an important role in modulating the properties of the cell wall in Gram-positive bacteria, influencing the net charge of the cell wall. In Streptococcus agalactiae serotype III (strain NEM316), this protein is D-alanine--D-alanyl carrier protein ligase.